Here is a 708-residue protein sequence, read N- to C-terminus: Leucine-rich repeat neuronal protein 3 (708 aa).

The N-terminal stretch at 1–22 (MKDMPLRIHVLLGLAITTLVQA) is a signal peptide. The 47-residue stretch at 23-69 (VDKKVDCPRLCTCEIRPWFTPRSIYMEASTVDCNDLGLLTFPARLPA) folds into the LRRNT domain. Residues 23-628 (VDKKVDCPRL…KEYEKNNTTT (606 aa)) lie on the Extracellular side of the membrane. 12 LRR repeats span residues 70–91 (NTQI…TDFP), 93–114 (NLTG…NVKK), 117–138 (QLLS…CLSE), 141–162 (NLQE…AFIG), 165–186 (NLLR…WFDA), 189–210 (NLEI…NFKP), 213–234 (NLRS…ALVG), 237–258 (NLES…ALQK), 261–282 (NLKF…DFSN), 285–304 (HLKE…DSLA), 310–332 (DLRK…AFFR), and 335–358 (KLES…ESLP). N-linked (GlcNAc...) asparagine glycans are attached at residues Asn93 and Asn103. Asn223 is a glycosylation site (N-linked (GlcNAc...) asparagine). The region spanning 368–421 (NPIRCDCVIRWMNMNKTNIRFMEPDSLFCVDPPEFQGQNVRQVHFRDMMEICLP) is the LRRCT domain. Asn382 carries N-linked (GlcNAc...) asparagine glycosylation. Residues 421–514 (PLIAPESFPS…DLKSVMIKVD (94 aa)) form the Ig-like C2-type domain. Cys444 and Cys496 form a disulfide bridge. Residues Asn522, Asn579, Asn608, Asn624, and Asn625 are each glycosylated (N-linked (GlcNAc...) asparagine). The 95-residue stretch at 523–617 (GSLNIKIRDI…NVTTKGLHPD (95 aa)) folds into the Fibronectin type-III domain. The chain crosses the membrane as a helical span at residues 629–649 (LMACLGGLLGIIGVICLISCL). The Cytoplasmic portion of the chain corresponds to 650 to 708 (SPEMNCDGGHSYVRNYLQKPTFALGELYPPLINLWEAGKEKSTSLKVKATVIGLPTNMS).

The protein resides in the membrane. This is Leucine-rich repeat neuronal protein 3 (LRRN3) from Homo sapiens (Human).